The sequence spans 388 residues: 3beta-hydroxysteroid dehydrogenase dhs-16 (388 aa).

The chain crosses the membrane as a helical span at residues 2–22; the sequence is LELIYILPLLCFVYFLFRRFV. Catalysis depends on Tyr188, which acts as the Proton acceptor. Transmembrane regions (helical) follow at residues 300–320 and 346–366; these read AIFMFIPLSIFPTALQDWILA and IQWIQFLSQIAIIPLLYTIFF.

Belongs to the short-chain dehydrogenases/reductases (SDR) family. As to expression, strongly expressed in the hypodermis and posterior pharyngeal bulb and in a number of unidentified neurons of the head and tail.

It is found in the membrane. The catalysed reaction is lathosterol + NAD(+) = 5alpha-cholest-7-en-3-one + NADH + H(+). The protein operates within steroid hormone biosynthesis; dafachronic acid biosynthesis. Its function is as follows. 3beta-hydroxysteroid dehydrogenase that converts 3beta-hydroxysteroids to 3-ketosteroids, an essential step in the production of dafachronic acids from cholesterol. Catalyzes the dehydrogenation of lathosterol (5alpha-cholest-7-en-3beta-ol) to lathosterone (5alpha-cholest-7-en-3-one), a step required for maximal biosynthesis of Delta(7)-dafachronic acid. Dafachronic acids act as ligands and bind directly to the nuclear hormone receptor (NHR) daf-12, suppressing dauer formation and inducing reproductive growth, they can also regulate C.elegans lifespan. This Caenorhabditis elegans protein is 3beta-hydroxysteroid dehydrogenase dhs-16 (dhs-16).